A 148-amino-acid chain; its full sequence is UPF0756 membrane protein YeaL (148 aa).

Transmembrane regions (helical) follow at residues 14–34 (ALGFVSHNTTVAVSILVLIIV), 51–71 (LTIGIIILTIGVMAPIASGSL), 80–100 (FFNWKSLVAIAVGVIVSWLGG), and 121–141 (VLGVALFRGVPVGPLIAAGLV).

Belongs to the UPF0756 family.

The protein localises to the cell membrane. The sequence is that of UPF0756 membrane protein YeaL from Escherichia fergusonii (strain ATCC 35469 / DSM 13698 / CCUG 18766 / IAM 14443 / JCM 21226 / LMG 7866 / NBRC 102419 / NCTC 12128 / CDC 0568-73).